The primary structure comprises 703 residues: Polyribonucleotide nucleotidyltransferase (703 aa).

Mg(2+) contacts are provided by Asp488 and Asp494. The 60-residue stretch at 555-614 folds into the KH domain; the sequence is PRLYVMKINPEKIRDVIGKGGAVIRALTEETGTQINIEEDGTITIASNDSAKADEAKRRI. Residues 624–692 enclose the S1 motif domain; it reads GKVYEGAITK…EKGRVKLSMK (69 aa).

Belongs to the polyribonucleotide nucleotidyltransferase family. Mg(2+) serves as cofactor.

The protein resides in the cytoplasm. It carries out the reaction RNA(n+1) + phosphate = RNA(n) + a ribonucleoside 5'-diphosphate. In terms of biological role, involved in mRNA degradation. Catalyzes the phosphorolysis of single-stranded polyribonucleotides processively in the 3'- to 5'-direction. In Polaromonas naphthalenivorans (strain CJ2), this protein is Polyribonucleotide nucleotidyltransferase.